A 317-amino-acid polypeptide reads, in one-letter code: DNA-directed RNA polymerase subunit alpha 2 (317 aa).

The alpha N-terminal domain (alpha-NTD) stretch occupies residues 1-227 (MALENLLHPT…NQLRNIVDIE (227 aa)). Positions 241–317 (INPILLKHVE…TLIENWPQDL (77 aa)) are alpha C-terminal domain (alpha-CTD).

It belongs to the RNA polymerase alpha chain family. As to quaternary structure, homodimer. The RNAP catalytic core consists of 2 alpha, 1 beta, 1 beta' and 1 omega subunit. When a sigma factor is associated with the core the holoenzyme is formed, which can initiate transcription.

The catalysed reaction is RNA(n) + a ribonucleoside 5'-triphosphate = RNA(n+1) + diphosphate. DNA-dependent RNA polymerase catalyzes the transcription of DNA into RNA using the four ribonucleoside triphosphates as substrates. In Francisella tularensis subsp. holarctica (strain FTNF002-00 / FTA), this protein is DNA-directed RNA polymerase subunit alpha 2.